The primary structure comprises 118 residues: MTVQNEPSAKTHGVILTEAAAAKAKSLLDQEGRDDLALRIAVQPGGCAGLRYNLFFDDRTLDGDQTAEFGGVRLIVDRMSAPYVEGASIDFVDTIEKQGFTIDNPNATGSCACGDSFN.

It belongs to the HesB/IscA family.

The polypeptide is Protein MT2260 (Mycobacterium tuberculosis (strain CDC 1551 / Oshkosh)).